Reading from the N-terminus, the 182-residue chain is Oligoribonuclease (182 aa).

The region spanning 8 to 171 is the Exonuclease domain; it reads LIWIDLEMTG…DDIRESIKEL (164 aa). Y129 is a catalytic residue.

It belongs to the oligoribonuclease family.

It localises to the cytoplasm. Its function is as follows. 3'-to-5' exoribonuclease specific for small oligoribonucleotides. This is Oligoribonuclease from Haemophilus influenzae (strain 86-028NP).